A 212-amino-acid chain; its full sequence is MQTAIIDYGMGNLHSVLKSVRTAGQLAGKNTEIFLSGDPDRVSRADKVIFPGQGAMPDCMAALKRDGLDEAVKDALKNKPFFGICVGAQLLFDHSEEGNTDGLGWFGGKVRRFERDLRDPQGCRLKVPHMGWNTVRQTQNHPLFKDIPQDTRFYFVHSYYFAPENPETILGESDYPSPFACIVGKDNVFATQFHTEKSHDAGLTMLKNFLNW.

The Glutamine amidotransferase type-1 domain occupies 2 to 212 (QTAIIDYGMG…LTMLKNFLNW (211 aa)). Cysteine 85 serves as the catalytic Nucleophile. Catalysis depends on residues histidine 194 and glutamate 196.

Heterodimer of HisH and HisF.

It localises to the cytoplasm. The catalysed reaction is 5-[(5-phospho-1-deoxy-D-ribulos-1-ylimino)methylamino]-1-(5-phospho-beta-D-ribosyl)imidazole-4-carboxamide + L-glutamine = D-erythro-1-(imidazol-4-yl)glycerol 3-phosphate + 5-amino-1-(5-phospho-beta-D-ribosyl)imidazole-4-carboxamide + L-glutamate + H(+). It catalyses the reaction L-glutamine + H2O = L-glutamate + NH4(+). The protein operates within amino-acid biosynthesis; L-histidine biosynthesis; L-histidine from 5-phospho-alpha-D-ribose 1-diphosphate: step 5/9. Its function is as follows. IGPS catalyzes the conversion of PRFAR and glutamine to IGP, AICAR and glutamate. The HisH subunit catalyzes the hydrolysis of glutamine to glutamate and ammonia as part of the synthesis of IGP and AICAR. The resulting ammonia molecule is channeled to the active site of HisF. In Neisseria meningitidis serogroup B (strain ATCC BAA-335 / MC58), this protein is Imidazole glycerol phosphate synthase subunit HisH (hisH).